The following is a 556-amino-acid chain: MKTDIEIAQSVELKPITEVVEKVGIGFDDLELYGKYKAKLSFDKINEVKDDKPGKLILVTAINPTPAGEGKSTMSIGLADALNKIGKKTMIALREPSLGPVMGIKGGAAGGGYAQVLPMEDINLHFTGDMHAITTANNALSALLDNHIHQGNALGIDQRRIIWKRVVDLNDRALRHVTVGLGGPLNGIPREDGFDITVASEIMAILCLATDINDLKERLANIVVAYRYDRTPVYVRDLEIEGALTLILKDAIKPNLVQTIYGTPALVHGGPFANIAHGCNSVLATSTALRLADYTVTEAGFGADLGAEKFLDIKTPNLPTTPDAVVIVATLRALKMHGGVAKTDLSEENVQAVRDGFSNLKRHVENIRKFGIPVVVAINEFVADTEAEIAALKELCSEIKVPVELASVWANGADGGIDLANTVVDVVENGNADYKRLYSDDDSLEEKITKIVTEIYGGKSVVFEKKAKNQLKQFAEFGWDKLPVCMAKTQYSFSDNQFLLGAPEGFDITIREFVPKTGAGFIVALTGDVMTMPGLPKAPAALKMDVTEDGTAVGLF.

ATP is bound at residue 65-72; it reads TPAGEGKS.

The protein belongs to the formate--tetrahydrofolate ligase family.

It carries out the reaction (6S)-5,6,7,8-tetrahydrofolate + formate + ATP = (6R)-10-formyltetrahydrofolate + ADP + phosphate. It participates in one-carbon metabolism; tetrahydrofolate interconversion. The chain is Formate--tetrahydrofolate ligase from Streptococcus thermophilus (strain CNRZ 1066).